Here is a 356-residue protein sequence, read N- to C-terminus: UDP-N-acetylglucosamine--N-acetylmuramyl-(pentapeptide) pyrophosphoryl-undecaprenol N-acetylglucosamine transferase (356 aa).

2 residues coordinate UDP-N-acetyl-alpha-D-glucosamine: Ser195 and Gln287.

It belongs to the glycosyltransferase 28 family. MurG subfamily.

It localises to the cell membrane. It carries out the reaction Mur2Ac(oyl-L-Ala-gamma-D-Glu-L-Lys-D-Ala-D-Ala)-di-trans,octa-cis-undecaprenyl diphosphate + UDP-N-acetyl-alpha-D-glucosamine = beta-D-GlcNAc-(1-&gt;4)-Mur2Ac(oyl-L-Ala-gamma-D-Glu-L-Lys-D-Ala-D-Ala)-di-trans,octa-cis-undecaprenyl diphosphate + UDP + H(+). The protein operates within cell wall biogenesis; peptidoglycan biosynthesis. In terms of biological role, cell wall formation. Catalyzes the transfer of a GlcNAc subunit on undecaprenyl-pyrophosphoryl-MurNAc-pentapeptide (lipid intermediate I) to form undecaprenyl-pyrophosphoryl-MurNAc-(pentapeptide)GlcNAc (lipid intermediate II). The polypeptide is UDP-N-acetylglucosamine--N-acetylmuramyl-(pentapeptide) pyrophosphoryl-undecaprenol N-acetylglucosamine transferase (Streptococcus gordonii (strain Challis / ATCC 35105 / BCRC 15272 / CH1 / DL1 / V288)).